Consider the following 77-residue polypeptide: UPF0291 protein BLi02035/BL02933 (77 aa).

The disordered stretch occupies residues 57–77 (PEGNDVTPEKLKQEKRNRRLH).

Belongs to the UPF0291 family.

Its subcellular location is the cytoplasm. In Bacillus licheniformis (strain ATCC 14580 / DSM 13 / JCM 2505 / CCUG 7422 / NBRC 12200 / NCIMB 9375 / NCTC 10341 / NRRL NRS-1264 / Gibson 46), this protein is UPF0291 protein BLi02035/BL02933.